Here is a 347-residue protein sequence, read N- to C-terminus: Spermidine/putrescine import ATP-binding protein PotA (347 aa).

An ABC transporter domain is found at 6-238 (LEIKNLSHYY…PKTKFVADFI (233 aa)). 40–47 (GPSGCGKT) contacts ATP.

It belongs to the ABC transporter superfamily. Spermidine/putrescine importer (TC 3.A.1.11.1) family. The complex is composed of two ATP-binding proteins (PotA), two transmembrane proteins (PotB and PotC) and a solute-binding protein (PotD).

It is found in the cell inner membrane. It catalyses the reaction ATP + H2O + polyamine-[polyamine-binding protein]Side 1 = ADP + phosphate + polyamineSide 2 + [polyamine-binding protein]Side 1.. Part of the ABC transporter complex PotABCD involved in spermidine/putrescine import. Responsible for energy coupling to the transport system. In Borreliella afzelii (strain PKo) (Borrelia afzelii), this protein is Spermidine/putrescine import ATP-binding protein PotA.